Reading from the N-terminus, the 64-residue chain is Sulfur carrier protein ThiS (64 aa).

Position 64 is a 1-thioglycine; alternate (Gly64). Gly64 is subject to Glycyl adenylate; alternate. Gly64 is covalently cross-linked (Glycyl cysteine thioester (Gly-Cys) (interchain with C-192 in TtuC); alternate).

Belongs to the sulfur carrier protein ThiS family. C-terminal thiocarboxylation occurs in 2 steps, it is first acyl-adenylated (-COAMP) by TtuC, then thiocarboxylated (-COSH) by the cysteine desulfurases IscS or SufS.

It functions in the pathway cofactor biosynthesis; thiamine diphosphate biosynthesis. In terms of biological role, is the sulfur donor in the synthesis of the thiazole phosphate moiety of thiamine phosphate. The sequence is that of Sulfur carrier protein ThiS from Thermus thermophilus (strain ATCC BAA-163 / DSM 7039 / HB27).